A 495-amino-acid chain; its full sequence is 1-aminocyclopropane-1-carboxylate synthase 6 (495 aa).

Substrate is bound by residues Glu58 and Tyr96. N6-(pyridoxal phosphate)lysine is present on Lys280. Phosphoserine occurs at positions 480, 483, and 488.

This sequence belongs to the class-I pyridoxal-phosphate-dependent aminotransferase family. Homodimer and heterodimer. In vivo, the relevance of heterodimerization with other ACS enzymes is however unsure. Interacts with GRF3. Requires pyridoxal 5'-phosphate as cofactor. Post-translationally, phosphorylated on serine residue by MAP kinase (MPK6). In terms of processing, may be processed at its C-terminus. As to expression, expressed in roots and flowers.

The enzyme catalyses S-adenosyl-L-methionine = 1-aminocyclopropane-1-carboxylate + S-methyl-5'-thioadenosine + H(+). It participates in alkene biosynthesis; ethylene biosynthesis via S-adenosyl-L-methionine; ethylene from S-adenosyl-L-methionine: step 1/2. Functionally, 1-aminocyclopropane-1-carboxylate synthase (ACS) enzymes catalyze the conversion of S-adenosyl-L-methionine (SAM) into 1-aminocyclopropane-1-carboxylate (ACC), a direct precursor of ethylene. Involved in bacterial flagellin-induced ethylene production. This is 1-aminocyclopropane-1-carboxylate synthase 6 (ACS6) from Arabidopsis thaliana (Mouse-ear cress).